The following is an 85-amino-acid chain: Small ribosomal subunit protein eS21 (85 aa).

The protein belongs to the eukaryotic ribosomal protein eS21 family. Component of the 40S small ribosomal subunit.

It localises to the cytoplasm. The protein resides in the cytosol. The protein localises to the rough endoplasmic reticulum. The sequence is that of Small ribosomal subunit protein eS21 (rps-21) from Pectinaria gouldii (Trumpet worm).